The primary structure comprises 359 residues: Malonyl-CoA reductase (359 aa).

16–19 (TGLV) is a binding site for NADP(+). Cys153 functions as the Acyl-thioester intermediate in the catalytic mechanism. 183–184 (SG) lines the NADP(+) pocket. The active-site Proton acceptor is His248. 335–336 (NT) provides a ligand contact to NADP(+).

Belongs to the aspartate-semialdehyde dehydrogenase family. Homodimer and possibly a tetramer. Mg(2+) serves as cofactor. Requires Mn(2+) as cofactor.

It carries out the reaction 3-oxopropanoate + NADP(+) + CoA = malonyl-CoA + NADPH + H(+). Activated by dithioerythritol (5 mM) and inhibited by the thiol-blocking agent iodoacetamide (0.1 mM). Its function is as follows. Catalyzes the reduction of malonyl-CoA to malonate semialdehyde, a key step in the 3-hydroxypropanoate and the 3-hydroxypropanoate/4-hydroxybutyrate cycles. Can also use succinyl-CoA and succinate semialdehyde as substrates but at a lower rate than malonyl-CoA. This chain is Malonyl-CoA reductase (mcr), found in Sulfurisphaera tokodaii (strain DSM 16993 / JCM 10545 / NBRC 100140 / 7) (Sulfolobus tokodaii).